Here is a 791-residue protein sequence, read N- to C-terminus: ATP-dependent 6-phosphofructokinase, platelet type (791 aa).

Residue methionine 1 is modified to N-acetylmethionine. Residues 1 to 399 (MDNKVSASPR…NLNTYKRLAI (399 aa)) are N-terminal catalytic PFK domain 1. Phosphoserine is present on serine 6. Serine 12 bears the Phosphoserine; by PKA mark. A Phosphoserine modification is found at serine 21. ATP-binding positions include glycine 34, 97–98 (RS), and 127–130 (GSGS). The residue at position 142 (serine 142) is a Phosphoserine. Residues 173–175 (SID), arginine 210, 217–219 (MGR), glutamate 273, arginine 301, and 307–310 (HVQR) contribute to the substrate site. The Proton acceptor role is filled by aspartate 175. A Phosphoserine modification is found at serine 386. The residue at position 395 (lysine 395) is an N6-acetyllysine. Positions 400 to 411 (KLPDDKIQKSNC) are interdomain linker. Positions 412-791 (NVAVINVGAP…RGGPEEPAAI (380 aa)) are C-terminal regulatory PFK domain 2. Arginine 481 lines the beta-D-fructose 2,6-bisphosphate pocket. The residue at position 486 (lysine 486) is an N6-acetyllysine. Beta-D-fructose 2,6-bisphosphate contacts are provided by residues 538–542 (TVSNN), arginine 576, 583–585 (MGG), and glutamate 639. O-linked (GlcNAc) serine glycosylation is present at serine 540. Tyrosine 651 is subject to Phosphotyrosine. Beta-D-fructose 2,6-bisphosphate is bound by residues arginine 665 and 671-674 (HMQQ). At lysine 688 the chain carries N6-acetyllysine. Arginine 744 contacts beta-D-fructose 2,6-bisphosphate.

Belongs to the phosphofructokinase type A (PFKA) family. ATP-dependent PFK group I subfamily. Eukaryotic two domain clade 'E' sub-subfamily. Homo- and heterotetramers. Phosphofructokinase (PFK) enzyme functions as a tetramer composed of different combinations of 3 types of subunits, called PFKM (M), PFKL (L) and PFKP (P). The composition of the PFK tetramer differs according to the tissue type it is present in. The kinetic and regulatory properties of the tetrameric enzyme are dependent on the subunit composition, hence can vary across tissues. Interacts with ATG4B; promoting phosphorylation of ATG4B. Mg(2+) serves as cofactor. Post-translationally, glcNAcylation decreases enzyme activity. In terms of processing, phosphorylation at Ser-386 promotes interaction with ATG4B.

It localises to the cytoplasm. It carries out the reaction beta-D-fructose 6-phosphate + ATP = beta-D-fructose 1,6-bisphosphate + ADP + H(+). It functions in the pathway carbohydrate degradation; glycolysis; D-glyceraldehyde 3-phosphate and glycerone phosphate from D-glucose: step 3/4. Its activity is regulated as follows. Allosterically activated by ADP, AMP, or fructose 2,6-bisphosphate, and allosterically inhibited by ATP or citrate. Catalyzes the phosphorylation of D-fructose 6-phosphate to fructose 1,6-bisphosphate by ATP, the first committing step of glycolysis. In Oryctolagus cuniculus (Rabbit), this protein is ATP-dependent 6-phosphofructokinase, platelet type (PFKP).